A 624-amino-acid polypeptide reads, in one-letter code: Leucine-rich repeat, immunoglobulin-like domain and transmembrane domain-containing protein 1 (624 aa).

The signal sequence occupies residues 1–21 (MWVALGMLWLLALGGPHQAWG). Positions 22 to 59 (FCPSECSCSLRILSDGSKARTVVCSDPDLTLPPASIPP) constitute an LRRNT domain. Residues 22-527 (FCPSECSCSL…EVVDAEGTQR (506 aa)) lie on the Lumenal side of the membrane. LRR repeat units follow at residues 60–81 (DTCK…TFRP), 84–105 (RLEQ…MLRG), 108–129 (RLRE…ALRD), 132–153 (QLQL…AAHF), and 156–177 (NLTF…LLDV). The N-linked (GlcNAc...) asparagine glycan is linked to N156. The 54-residue stretch at 201–254 (NPWVCDCRLYDLVHLLDGWVSSNLIFIEARLRCASPRSLAGVAFSQLELRKCQS) folds into the LRRCT domain. The Ig-like C2-type domain maps to 267–336 (PLGSTVLLRC…YICQAKNFLG (70 aa)). C276 and C329 are joined by a disulfide. N-linked (GlcNAc...) asparagine glycans are attached at residues N297 and N456. The 89-residue stretch at 431-519 (MVRSLKVVGD…QCVIFSTDEV (89 aa)) folds into the Fibronectin type-III domain. Residues 526–549 (QRLINMVVISVAAIIALPPTLLVC) form an LRR 6 repeat. The chain crosses the membrane as a helical span at residues 528–548 (LINMVVISVAAIIALPPTLLV). The Cytoplasmic portion of the chain corresponds to 549 to 624 (CCGALRRRCH…GGRRINEYFC (76 aa)).

As to quaternary structure, may form a homodimer. Interacts with LRIT2; may form a heterodimer with LRIT2. Interacts (via its N-terminal extracellular domain) with metabotropic glutamate receptor GRM6. Interacts (via its extreme C-terminus) with the scaffold protein FRMPD2 (via the third PDZ domain); the interaction leads to their colocalization in photoreceptor synapses. Expressed predominantly in developing photoreceptor and bipolar cells.

It localises to the endoplasmic reticulum membrane. It is found in the cell projection. The protein localises to the dendrite. Photoreceptor synaptic protein essential for normal vision. Involved in synapse formation in cone photoreceptor cells. The protein is Leucine-rich repeat, immunoglobulin-like domain and transmembrane domain-containing protein 1 (Lrit1) of Mus musculus (Mouse).